Here is a 400-residue protein sequence, read N- to C-terminus: Ribose-phosphate pyrophosphokinase 2, chloroplastic (400 aa).

The N-terminal 44 residues, 1–44 (MASLALTSPPSVKIPSYLSSSSSSLFSRSSISFRTTESRSRICV), are a transit peptide targeting the chloroplast. Mg(2+) contacts are provided by Asp214, His216, Asp225, and Asp229. Residues 300–315 (GKVAVMVDDIIDTAGT) are binding of phosphoribosylpyrophosphate.

It belongs to the ribose-phosphate pyrophosphokinase family.

The protein localises to the plastid. It localises to the chloroplast. It catalyses the reaction D-ribose 5-phosphate + ATP = 5-phospho-alpha-D-ribose 1-diphosphate + AMP + H(+). The protein is Ribose-phosphate pyrophosphokinase 2, chloroplastic (PRS2) of Arabidopsis thaliana (Mouse-ear cress).